A 282-amino-acid chain; its full sequence is Shikimate dehydrogenase (NADP(+)) (282 aa).

Shikimate-binding positions include 19–21 and Thr-66; that span reads SFS. The active-site Proton acceptor is Lys-70. Asn-91 and Asp-106 together coordinate shikimate. NADP(+) is bound by residues 130–134, 152–157, Thr-196, Met-200, and Leu-224; these read GAGGA and NRTVEK. Tyr-226 is a binding site for shikimate. Residue Gly-247 coordinates NADP(+).

Belongs to the shikimate dehydrogenase family. In terms of assembly, homodimer.

It catalyses the reaction shikimate + NADP(+) = 3-dehydroshikimate + NADPH + H(+). It participates in metabolic intermediate biosynthesis; chorismate biosynthesis; chorismate from D-erythrose 4-phosphate and phosphoenolpyruvate: step 4/7. In terms of biological role, involved in the biosynthesis of the chorismate, which leads to the biosynthesis of aromatic amino acids. Catalyzes the reversible NADPH linked reduction of 3-dehydroshikimate (DHSA) to yield shikimate (SA). This Methanocaldococcus jannaschii (strain ATCC 43067 / DSM 2661 / JAL-1 / JCM 10045 / NBRC 100440) (Methanococcus jannaschii) protein is Shikimate dehydrogenase (NADP(+)).